The sequence spans 278 residues: Large ribosomal subunit protein uL2 (278 aa).

A disordered region spans residues 223–278 (GSVMNPNDHPHGGGEGKAPIGHPSPMSPWGKKTLGKKTRDHKAKSEKFIVRHRRAK). The segment covering 255–264 (TLGKKTRDHK) has biased composition (basic residues).

It belongs to the universal ribosomal protein uL2 family. Part of the 50S ribosomal subunit. Forms a bridge to the 30S subunit in the 70S ribosome.

One of the primary rRNA binding proteins. Required for association of the 30S and 50S subunits to form the 70S ribosome, for tRNA binding and peptide bond formation. It has been suggested to have peptidyltransferase activity; this is somewhat controversial. Makes several contacts with the 16S rRNA in the 70S ribosome. The protein is Large ribosomal subunit protein uL2 of Lacticaseibacillus paracasei (strain ATCC 334 / BCRC 17002 / CCUG 31169 / CIP 107868 / KCTC 3260 / NRRL B-441) (Lactobacillus paracasei).